A 340-amino-acid polypeptide reads, in one-letter code: ATP-dependent 6-phosphofructokinase (340 aa).

Gly-11 lines the ATP pocket. 21–25 (RAVVR) contributes to the ADP binding site. ATP contacts are provided by residues 72-73 (RY) and 102-105 (GDGS). Asp-103 contributes to the Mg(2+) binding site. 125 to 127 (TID) is a substrate binding site. Asp-127 functions as the Proton acceptor in the catalytic mechanism. Arg-154 contacts ADP. Substrate-binding positions include Arg-162 and 169 to 171 (MGR). Residues 185-187 (GAD), Lys-211, and 213-215 (KNH) contribute to the ADP site. Substrate is bound by residues Glu-222, Arg-244, and 250-253 (HIQR).

It belongs to the phosphofructokinase type A (PFKA) family. ATP-dependent PFK group I subfamily. Prokaryotic clade 'B1' sub-subfamily. As to quaternary structure, homotetramer. The cofactor is Mg(2+).

Its subcellular location is the cytoplasm. The enzyme catalyses beta-D-fructose 6-phosphate + ATP = beta-D-fructose 1,6-bisphosphate + ADP + H(+). It functions in the pathway carbohydrate degradation; glycolysis; D-glyceraldehyde 3-phosphate and glycerone phosphate from D-glucose: step 3/4. With respect to regulation, allosterically activated by ADP and other diphosphonucleosides, and allosterically inhibited by phosphoenolpyruvate. Functionally, catalyzes the phosphorylation of D-fructose 6-phosphate to fructose 1,6-bisphosphate by ATP, the first committing step of glycolysis. The protein is ATP-dependent 6-phosphofructokinase of Lactococcus lactis subsp. lactis (Streptococcus lactis).